The primary structure comprises 90 residues: MGKYDRYISFKNANWESQSSGVMDGLKPHIEAADSPFWVYFMRQRELAHQRGLDDLRVLHNFLPTLRELLEELDDQPTLALLEQLEESCM.

This sequence belongs to the CowN family.

Is required to sustain N(2)-dependent growth in the presence of low levels of carbon monoxide (CO). Probably acts by protecting the N(2) fixation ability of the nitrogenase complex, which is inactivated in the presence of CO. This chain is N(2)-fixation sustaining protein CowN, found in Methylocella silvestris (strain DSM 15510 / CIP 108128 / LMG 27833 / NCIMB 13906 / BL2).